The primary structure comprises 717 residues: Copine family protein 5 (717 aa).

One can recognise a C2 domain in the interval 193 to 318; sequence YLGGIIVSAE…KYGPGSDNVY (126 aa). The VWFA domain occupies 377–567; it reads ELDQRRFDGE…LNKSRIAETA (191 aa).

This sequence belongs to the copine family.

The polypeptide is Copine family protein 5 (cpna-5) (Caenorhabditis elegans).